A 116-amino-acid polypeptide reads, in one-letter code: NADH-ubiquinone oxidoreductase chain 3 (116 aa).

A run of 3 helical transmembrane segments spans residues 3 to 23, 56 to 76, and 87 to 107; these read LIMTILTITAALSLILATVSF, FFLVAILFLLFDLEIALLLPL, and GTFFWATTVLILLTLGLIYEW.

Belongs to the complex I subunit 3 family.

The protein resides in the mitochondrion membrane. The catalysed reaction is a ubiquinone + NADH + 5 H(+)(in) = a ubiquinol + NAD(+) + 4 H(+)(out). Its function is as follows. Core subunit of the mitochondrial membrane respiratory chain NADH dehydrogenase (Complex I) that is believed to belong to the minimal assembly required for catalysis. Complex I functions in the transfer of electrons from NADH to the respiratory chain. The immediate electron acceptor for the enzyme is believed to be ubiquinone. The chain is NADH-ubiquinone oxidoreductase chain 3 (MT-ND3) from Carassius auratus (Goldfish).